A 549-amino-acid polypeptide reads, in one-letter code: Oxygen-dependent choline dehydrogenase (549 aa).

4–33 (DFVIIGSGSAGSAMAYRLSEDGRYSVIVIE) serves as a coordination point for FAD. His465 serves as the catalytic Proton acceptor.

It belongs to the GMC oxidoreductase family. FAD serves as cofactor.

It carries out the reaction choline + A = betaine aldehyde + AH2. The enzyme catalyses betaine aldehyde + NAD(+) + H2O = glycine betaine + NADH + 2 H(+). The protein operates within amine and polyamine biosynthesis; betaine biosynthesis via choline pathway; betaine aldehyde from choline (cytochrome c reductase route): step 1/1. Its function is as follows. Involved in the biosynthesis of the osmoprotectant glycine betaine. Catalyzes the oxidation of choline to betaine aldehyde and betaine aldehyde to glycine betaine at the same rate. In Brucella anthropi (strain ATCC 49188 / DSM 6882 / CCUG 24695 / JCM 21032 / LMG 3331 / NBRC 15819 / NCTC 12168 / Alc 37) (Ochrobactrum anthropi), this protein is Oxygen-dependent choline dehydrogenase.